The chain runs to 364 residues: DNA replication and repair protein RecF (364 aa).

Gly-30–Thr-37 contributes to the ATP binding site.

Belongs to the RecF family.

It is found in the cytoplasm. In terms of biological role, the RecF protein is involved in DNA metabolism; it is required for DNA replication and normal SOS inducibility. RecF binds preferentially to single-stranded, linear DNA. It also seems to bind ATP. In Clostridium botulinum (strain Okra / Type B1), this protein is DNA replication and repair protein RecF.